A 358-amino-acid polypeptide reads, in one-letter code: Probable branched-chain-amino-acid aminotransferase (358 aa).

N6-(pyridoxal phosphate)lysine is present on K196.

Belongs to the class-IV pyridoxal-phosphate-dependent aminotransferase family. It depends on pyridoxal 5'-phosphate as a cofactor.

It catalyses the reaction L-leucine + 2-oxoglutarate = 4-methyl-2-oxopentanoate + L-glutamate. The catalysed reaction is L-isoleucine + 2-oxoglutarate = (S)-3-methyl-2-oxopentanoate + L-glutamate. The enzyme catalyses L-valine + 2-oxoglutarate = 3-methyl-2-oxobutanoate + L-glutamate. It participates in amino-acid biosynthesis; L-isoleucine biosynthesis; L-isoleucine from 2-oxobutanoate: step 4/4. The protein operates within amino-acid biosynthesis; L-leucine biosynthesis; L-leucine from 3-methyl-2-oxobutanoate: step 4/4. Its pathway is amino-acid biosynthesis; L-valine biosynthesis; L-valine from pyruvate: step 4/4. Functionally, acts on leucine, isoleucine and valine. The polypeptide is Probable branched-chain-amino-acid aminotransferase (ilvE) (Staphylococcus epidermidis (strain ATCC 12228 / FDA PCI 1200)).